Reading from the N-terminus, the 354-residue chain is MAVDFSMRQLLEAGAHFGHQSHRWNPKMQPYIFGTRNNIHIIDLAQTVPALHAALQAVSDTVARGGRVLFVGTKRQAADAIAEAAKRSAQYYVNSRWLGGMLTNWKTISGSIQRLRKVDETLEGGAVGLTKKERLMLTREKEKLEKALGGIKDMGGVPDLLFVIDTNKEQLAIKEAQRLGIPVAAIVDTNCNPDGISYIVPANDDAGRAIALYCDLIARAAIEGIGRGQGALGIDVGASEEPTAEELPANDDVVASVASDAIAPADVAALAESTEHFEQLAAPRGAPDDLTKLTGVGPQLVQKLNDAGVWHYWQIAAMQADDVAKLDADLKLNGRIARDGWVEQSRAFVEAAAA.

This sequence belongs to the universal ribosomal protein uS2 family.

This Methylorubrum populi (strain ATCC BAA-705 / NCIMB 13946 / BJ001) (Methylobacterium populi) protein is Small ribosomal subunit protein uS2.